Here is a 227-residue protein sequence, read N- to C-terminus: MSEVTLKIEGLRKTYLAGTPGEVAVLRGVDLTLHAGEVVALVAPSGAGKSTLLQIAGLLDVADAGRVEIAGQDMAGARDRKRTRVRRQDVGFVYQFHHLLPEFSALENIVLPQLANGISQRDAEARGAELLALVGLETRAAHRPAALSGGEQQRVAFCRALANRPRLLLADEPTGNLDPATSDQVFEVLMQLVSETGLSALIATHNLELAARMDRVLHLEDGVLVER.

Positions 6–227 (LKIEGLRKTY…HLEDGVLVER (222 aa)) constitute an ABC transporter domain. 43–50 (APSGAGKS) is a binding site for ATP.

This sequence belongs to the ABC transporter superfamily. Lipoprotein translocase (TC 3.A.1.125) family. As to quaternary structure, the complex is composed of two ATP-binding proteins (LolD) and two transmembrane proteins (LolC and LolE).

It localises to the cell inner membrane. Its function is as follows. Part of the ABC transporter complex LolCDE involved in the translocation of mature outer membrane-directed lipoproteins, from the inner membrane to the periplasmic chaperone, LolA. Responsible for the formation of the LolA-lipoprotein complex in an ATP-dependent manner. This Ruegeria sp. (strain TM1040) (Silicibacter sp.) protein is Lipoprotein-releasing system ATP-binding protein LolD.